Here is a 652-residue protein sequence, read N- to C-terminus: MKERTSACRHGTPQKHPDTSEESQAMESVDNLCSQYEEKVRPCIDLIDSLRALGVEQDLALPAIAVIGDQSSGKSSVLEALSGVALPRGSGIVTRCPLVLKLKQLKQGEKWSGKVIYKDTEIEISHPSLVEREINKAQNLIAGEGLKISSDLISLEVSSPHVPDLTLIDLPGITRVAVGDQPADIEHKIKRLITEYIQKQETINLVVVPSNVDIATTEALKMAQEVDPQGDRTIGILTKPDLVDRGTEDKVVDVVRNLVCHLKKGYMIVKCRGQQDIQEQLSLAEALQKEQVFFKEHPQFRVLLEDGKATVPCLAKRLTMELTSHICKSLPILENQINVNHQIASEELQKYGADIPEDDSKRLSFLMNKINVFNKDILSLVQAQENISWEESRLFTKLRNEFLAWNDYIEEHFKKTLGSSEKHSQMEKFESHYRGRELPGFVDYKAFENIIKKEVKALEEPALNMLHRVTTMVKNAFTKVSSNNFGDFLNLHSTAKSKIEDIRFNQEKEAEKLIRLHFQMEHIVYCQDQAYKKALQEIREKEAEKEKSTFGAFQHNSPRKELTTTEMTQHLNAYYQECGRNIGRQIPLIIQYSILQTFGQEMEKAMLQLLQDTSKCNWFLTEQSDSREKKKFLKRRLLRLDEAQRKLAKFSN.

The interval 1–27 is disordered; it reads MKERTSACRHGTPQKHPDTSEESQAME. A Dynamin-type G domain is found at 58–331; sequence DLALPAIAVI…LTSHICKSLP (274 aa). Positions 68–75 are G1 motif; the sequence is GDQSSGKS. 68–75 contributes to the GTP binding site; that stretch reads GDQSSGKS. A G2 motif region spans residues 93–95; that stretch reads VTR. The G3 motif stretch occupies residues 169-172; that stretch reads DLPG. Residues 169 to 173 and 238 to 241 each bind GTP; these read DLPGI and TKPD. The tract at residues 238–241 is G4 motif; it reads TKPD. The G5 motif stretch occupies residues 270 to 273; the sequence is KCRG. The segment at 332 to 357 is bundle signaling element (BSE); it reads ILENQINVNHQIASEELQKYGADIPE. The segment at 357–526 is middle domain; it reads EDDSKRLSFL…HFQMEHIVYC (170 aa). Residues 358 to 622 form a stalk region; sequence DDSKRLSFLM…TSKCNWFLTE (265 aa). A GED domain is found at 564-652; it reads TTEMTQHLNA…AQRKLAKFSN (89 aa).

The protein belongs to the TRAFAC class dynamin-like GTPase superfamily. Dynamin/Fzo/YdjA family. Homooligomer. Oligomerizes into multimeric filamentous or ring-like structures by virtue of its stalk domain. Oligomerization is critical for GTPase activity, protein stability, and recognition of viral target structures. Interacts with TRPC1, TRPC3, TRPC4, TRPC5, TRPC6 and TRPC7. Interacts with HSPA5. Interacts with TUBB/TUBB5. Interacts with DDX39A and DDX39B. Post-translationally, ISGylated.

Its subcellular location is the nucleus. It localises to the cytoplasm. It is found in the endoplasmic reticulum membrane. The protein localises to the perinuclear region. Functionally, interferon-induced dynamin-like GTPase which has antiviral activity against influenza A virus, (IAV) and Thogoto virus (THOV). Inhibits IAV by interfering with the process of primary transcription, probably by affecting the viral polymerase function. This is Interferon-induced GTP-binding protein Mx1 (Mx1) from Rattus norvegicus (Rat).